A 321-amino-acid polypeptide reads, in one-letter code: tRNA U34 carboxymethyltransferase (321 aa).

Carboxy-S-adenosyl-L-methionine is bound by residues Lys90, Trp104, Lys109, Gly129, 151–153, 180–181, Met195, Tyr199, and Arg314; these read DPT and IE.

It belongs to the class I-like SAM-binding methyltransferase superfamily. CmoB family. Homotetramer.

It catalyses the reaction carboxy-S-adenosyl-L-methionine + 5-hydroxyuridine(34) in tRNA = 5-carboxymethoxyuridine(34) in tRNA + S-adenosyl-L-homocysteine + H(+). Its function is as follows. Catalyzes carboxymethyl transfer from carboxy-S-adenosyl-L-methionine (Cx-SAM) to 5-hydroxyuridine (ho5U) to form 5-carboxymethoxyuridine (cmo5U) at position 34 in tRNAs. The chain is tRNA U34 carboxymethyltransferase from Mannheimia succiniciproducens (strain KCTC 0769BP / MBEL55E).